The chain runs to 74 residues: Lambda-hexatoxin-Hv1d (74 aa).

The N-terminal stretch at Met-1–Ala-22 is a signal peptide. Positions Gly-23–Phe-35 are excised as a propeptide. Cystine bridges form between Cys-40/Cys-54, Cys-47/Cys-59, Cys-50/Cys-51, and Cys-53/Cys-69.

The protein belongs to the neurotoxin 11 (kappa toxin) family. As to expression, expressed by the venom gland.

It localises to the secreted. In terms of biological role, this excitatory toxin inhibits insect calcium-activated potassium (KCa) channels (Slo-type). In Hadronyche versuta (Blue mountains funnel-web spider), this protein is Lambda-hexatoxin-Hv1d.